A 411-amino-acid polypeptide reads, in one-letter code: Prophage integrase IntR (411 aa).

A Core-binding (CB) domain is found at 81 to 176 (KTFGELCDIW…LLCSLLRFAY (96 aa)). The Tyr recombinase domain occupies 197–404 (IKPDPLSKTE…IDDMNDEQIA (208 aa)). Active-site residues include arginine 231, lysine 266, arginine 358, and histidine 381. Catalysis depends on tyrosine 391, which acts as the O-(3'-phospho-DNA)-tyrosine intermediate.

Belongs to the 'phage' integrase family.

In terms of biological role, integrase is necessary for integration of the phage into the host genome by site-specific recombination. In conjunction with excisionase, integrase is also necessary for excision of the prophage from the host genome. In Escherichia coli (strain K12), this protein is Prophage integrase IntR (intR).